A 499-amino-acid chain; its full sequence is Acetylcholine receptor subunit alpha-type acr-16 (499 aa).

Residues 1–19 form the signal peptide; the sequence is MSSVCALLLSCALFLVAHG. The Extracellular portion of the chain corresponds to 20–232; sequence SLQERRLYED…LHMRRRTLYY (213 aa). N-linked (GlcNAc...) asparagine glycosylation is found at N43 and N93. Cystine bridges form between C147–C161 and C211–C212. 3 consecutive transmembrane segments (helical) span residues 233–253, 261–281, and 289–309; these read GFNL…GFTL, ITLQ…VSEM, and VPLL…STVF. Residues 310-473 lie on the Cytoplasmic side of the membrane; sequence TVYVLNLHYR…WKFAAMVVDR (164 aa). A helical transmembrane segment spans residues 474-494; it reads LCLYVFTIFIIASTIGIFWSA. Residues 495 to 499 are Extracellular-facing; it reads PYLVA.

The protein belongs to the ligand-gated ion channel (TC 1.A.9) family. Acetylcholine receptor (TC 1.A.9.1) subfamily.

The protein localises to the postsynaptic cell membrane. It localises to the cell membrane. In terms of biological role, after binding acetylcholine, the AChR responds by an extensive change in conformation that affects all subunits and leads to opening of an ion-conducting channel across the plasma membrane. A subunit of the levamisole-insensitive nicotinic receptor. The sequence is that of Acetylcholine receptor subunit alpha-type acr-16 from Caenorhabditis briggsae.